Consider the following 378-residue polypeptide: Integrator complex assembly factor WDR73 (378 aa).

WD repeat units lie at residues 73-113, 121-163, 167-205, 214-255, 266-305, and 322-371; these read DFKV…VWQV, KAVS…VVDL, KTTY…LVDT, NRSP…LLDP, QCPV…VYDA, and EPLF…VWDW.

This sequence belongs to the WD repeat WDR73 family. As to quaternary structure, interacts with INTS9 and INTS11; the interaction is direct. Part of the multiprotein complex composed of BRAT1, WDR73, as well as integrator complex subunits INTS9 and INTS11. Expressed in kidney and brain. In the kidney, expressed in glomeruli, most probably in podocytes, and in tubules (at protein level). In the brain, expressed in the cerebellum, with high levels in Purkinje cells and their projecting axons, in the deep cerebellar nuclei and in pyramidal neurons of the cerebral cortex (at protein level). In the white matter, mainly present in astrocytes, but not in oligodendrocytes (at protein level). Also highly expressed in endothelial cells of cerebral capillaries (at protein level).

Its subcellular location is the cytoplasm. It is found in the cytoskeleton. It localises to the spindle. The protein resides in the spindle pole. The protein localises to the cleavage furrow. Functionally, component of a multiprotein complex required for the assembly of the RNA endonuclease module of the integrator complex. Associates with INTS9 and INTS11 in the cytoplasm, stabilizing the INTS9-INTS11 heterodimer and blocking the active site of INTS11. BRAT1 then joins the complex and plugs the active site of INTS11, leading to WDR73 release and nuclear import of INTS9 and INTS11. This Homo sapiens (Human) protein is Integrator complex assembly factor WDR73.